The primary structure comprises 157 residues: Transcription elongation factor GreA (157 aa).

It belongs to the GreA/GreB family.

Its function is as follows. Necessary for efficient RNA polymerase transcription elongation past template-encoded arresting sites. The arresting sites in DNA have the property of trapping a certain fraction of elongating RNA polymerases that pass through, resulting in locked ternary complexes. Cleavage of the nascent transcript by cleavage factors such as GreA or GreB allows the resumption of elongation from the new 3'terminus. GreA releases sequences of 2 to 3 nucleotides. The polypeptide is Transcription elongation factor GreA (Phenylobacterium zucineum (strain HLK1)).